Here is a 431-residue protein sequence, read N- to C-terminus: Adenylosuccinate synthetase (431 aa).

GTP-binding positions include 12-18 (GDEGKGK) and 40-42 (GHT). The active-site Proton acceptor is the D13. The Mg(2+) site is built by D13 and G40. Residues 13-16 (DEGK), 38-41 (NAGH), T131, R145, Q225, T240, and R304 contribute to the IMP site. Residue H41 is the Proton donor of the active site. Position 300–306 (300–306 (TVTGRKR)) interacts with substrate. Residues R306, 332–334 (KLD), and 414–416 (STS) each bind GTP.

Belongs to the adenylosuccinate synthetase family. In terms of assembly, homodimer. Mg(2+) is required as a cofactor.

It is found in the cytoplasm. The enzyme catalyses IMP + L-aspartate + GTP = N(6)-(1,2-dicarboxyethyl)-AMP + GDP + phosphate + 2 H(+). It participates in purine metabolism; AMP biosynthesis via de novo pathway; AMP from IMP: step 1/2. Plays an important role in the de novo pathway of purine nucleotide biosynthesis. Catalyzes the first committed step in the biosynthesis of AMP from IMP. The chain is Adenylosuccinate synthetase from Roseobacter denitrificans (strain ATCC 33942 / OCh 114) (Erythrobacter sp. (strain OCh 114)).